The sequence spans 108 residues: UPF0060 membrane protein Spro_2289 (108 aa).

4 helical membrane passes run 6–26 (LLFF…YLWL), 31–51 (SAWL…LLTL), 61–81 (AAYG…VDGV), and 85–105 (ALDW…VSGW).

This sequence belongs to the UPF0060 family.

It localises to the cell inner membrane. This is UPF0060 membrane protein Spro_2289 from Serratia proteamaculans (strain 568).